The following is a 203-amino-acid chain: MNSEVLLIEGASLMNIKLESEQISKLMNYLKLIIKWNKSYNLSAIRTMEKGVYKHLLDSLSVIAYIKDKSLLDVGSGAGLPGIVISIMRPELLVTVLDTVGKKCRFMQFAKTQLQLKNLNVIKNRVENYQIEFCFEQIISRAFSKVEKILKLTQHLLCNNGEYLLMKGAGFQQETLPYGVDIQSLCVPEILGKRYLLIFRREK.

S-adenosyl-L-methionine-binding positions include G75, L80, 126–127 (VE), and R141.

The protein belongs to the methyltransferase superfamily. RNA methyltransferase RsmG family.

It localises to the cytoplasm. It catalyses the reaction guanosine(527) in 16S rRNA + S-adenosyl-L-methionine = N(7)-methylguanosine(527) in 16S rRNA + S-adenosyl-L-homocysteine. Functionally, specifically methylates the N7 position of guanine in position 527 of 16S rRNA. This is Ribosomal RNA small subunit methyltransferase G from Ruthia magnifica subsp. Calyptogena magnifica.